The primary structure comprises 164 residues: Sorting nexin-3 (164 aa).

Positions 40 to 163 (EIEVCNPKTH…VRFIQDPTFQ (124 aa)) constitute a PX domain. The a 1,2-diacyl-sn-glycero-3-phospho-(1D-myo-inositol-3-phosphate) site is built by arginine 83, serine 85, lysine 114, arginine 120, and arginine 129.

Belongs to the sorting nexin family.

It is found in the cytoplasm. The protein localises to the golgi apparatus membrane. Its subcellular location is the prevacuolar compartment membrane. Required for retention of late Golgi membrane proteins. Component of the retrieval machinery that functions by direct interaction with the cytosolic tails of certain TGN membrane proteins during the sorting/budding process at the prevacuolar compartment. Binds phosphatidylinositol 3-phosphate (PtdIns(P3)). This is Sorting nexin-3 (SNX3) from Kluyveromyces lactis (strain ATCC 8585 / CBS 2359 / DSM 70799 / NBRC 1267 / NRRL Y-1140 / WM37) (Yeast).